The following is a 506-amino-acid chain: ATP synthase subunit alpha (506 aa).

171-178 contributes to the ATP binding site; that stretch reads GDRQTGKT.

This sequence belongs to the ATPase alpha/beta chains family. As to quaternary structure, F-type ATPases have 2 components, CF(1) - the catalytic core - and CF(0) - the membrane proton channel. CF(1) has five subunits: alpha(3), beta(3), gamma(1), delta(1), epsilon(1). CF(0) has four main subunits: a(1), b(1), b'(1) and c(9-12).

The protein localises to the cellular thylakoid membrane. The catalysed reaction is ATP + H2O + 4 H(+)(in) = ADP + phosphate + 5 H(+)(out). In terms of biological role, produces ATP from ADP in the presence of a proton gradient across the membrane. The alpha chain is a regulatory subunit. The protein is ATP synthase subunit alpha of Trichormus variabilis (strain ATCC 29413 / PCC 7937) (Anabaena variabilis).